The chain runs to 159 residues: Ribosomal RNA large subunit methyltransferase H (159 aa).

Residues L76, G108, and 127–132 (FSKMTF) each bind S-adenosyl-L-methionine.

The protein belongs to the RNA methyltransferase RlmH family. As to quaternary structure, homodimer.

It is found in the cytoplasm. The catalysed reaction is pseudouridine(1915) in 23S rRNA + S-adenosyl-L-methionine = N(3)-methylpseudouridine(1915) in 23S rRNA + S-adenosyl-L-homocysteine + H(+). Functionally, specifically methylates the pseudouridine at position 1915 (m3Psi1915) in 23S rRNA. The sequence is that of Ribosomal RNA large subunit methyltransferase H from Bifidobacterium animalis subsp. lactis (strain AD011).